A 54-amino-acid polypeptide reads, in one-letter code: Large ribosomal subunit protein bL33C (54 aa).

This sequence belongs to the bacterial ribosomal protein bL33 family.

This chain is Large ribosomal subunit protein bL33C (rpmG3), found in Streptomyces coelicolor (strain ATCC BAA-471 / A3(2) / M145).